The following is a 488-amino-acid chain: (S)-canadine synthase CYP719A21 (488 aa).

The chain crosses the membrane as a helical span at residues L6–F26. C432 is a heme binding site.

This sequence belongs to the cytochrome P450 family. Heme is required as a cofactor.

Its subcellular location is the membrane. It catalyses the reaction (S)-tetrahydrocolumbamine + reduced [NADPH--hemoprotein reductase] + O2 = (S)-canadine + oxidized [NADPH--hemoprotein reductase] + 2 H2O + H(+). It functions in the pathway alkaloid biosynthesis. Its function is as follows. Cytochrome P450 involved in the biosynthesis of the benzylisoquinoline alkaloid noscapine. Converts (S)-tetrahydrocolumbamine to (S)-canadine. The protein is (S)-canadine synthase CYP719A21 of Papaver somniferum (Opium poppy).